Reading from the N-terminus, the 218-residue chain is MNKDKIRVALADDQPLVREGFRYVINAQTDMTVSGEAGDGHDIIALAKQTKPDVILMDVQMPRCSGIEAAKDIMSALPNTKIVILTTFDTEEYVFEGIRAGAVGYLLKDTLPEELIDAIRAAARGEAIFRTVTAAKIISETFRAKQQTHAEELAEPFTKRELEVLQQMAYGLRNEDIAEKLFVSESTVKTHVHRILQKCNAQDRTQAVVFAIRNGIVQ.

One can recognise a Response regulatory domain in the interval Arg7–Ala123. Residue Asp58 is modified to 4-aspartylphosphate. Positions Ala150–Gly215 constitute an HTH luxR-type domain. A DNA-binding region (H-T-H motif) is located at residues Asn174–His193.

In terms of processing, phosphorylated by YxjM.

It localises to the cytoplasm. Its function is as follows. Probable member of the two-component regulatory system YxjM/YxjL. This is an uncharacterized protein from Bacillus subtilis (strain 168).